A 132-amino-acid polypeptide reads, in one-letter code: Phosphoribosyl-AMP cyclohydrolase (132 aa).

Aspartate 78 lines the Mg(2+) pocket. Zn(2+) is bound at residue cysteine 79. Residues aspartate 80 and aspartate 82 each coordinate Mg(2+). Cysteine 96 and cysteine 103 together coordinate Zn(2+).

This sequence belongs to the PRA-CH family. In terms of assembly, homodimer. It depends on Mg(2+) as a cofactor. Requires Zn(2+) as cofactor.

The protein resides in the cytoplasm. The catalysed reaction is 1-(5-phospho-beta-D-ribosyl)-5'-AMP + H2O = 1-(5-phospho-beta-D-ribosyl)-5-[(5-phospho-beta-D-ribosylamino)methylideneamino]imidazole-4-carboxamide. It participates in amino-acid biosynthesis; L-histidine biosynthesis; L-histidine from 5-phospho-alpha-D-ribose 1-diphosphate: step 3/9. Functionally, catalyzes the hydrolysis of the adenine ring of phosphoribosyl-AMP. The protein is Phosphoribosyl-AMP cyclohydrolase of Nitrosococcus oceani (strain ATCC 19707 / BCRC 17464 / JCM 30415 / NCIMB 11848 / C-107).